A 600-amino-acid chain; its full sequence is MVNNMTDLTAQDAVWQTRDHLDDPVIGELRNRFGPDAFTVQATRTGVPVVWVKREQLLEVGDFLKKLPKPYVMLFDLHGMDERLRTHRDGLPAADFSVFYHLISIDRNRDIMLKVALSENDLHVPTFTKLFPNANWYERETWEMFGITFDGHPHLTRLLMPPTWEGHPLRKDYPARATEFDPFELTKAKQDLEMEALTFKPEDWGMQRGTENEDFMFLNLGPNHPSSHGAFRIVLQLDGEEIVDCVPDIGYHHRGAEKMGERQSWHSYIPYTDRIEYLGGCVNEMPYVLAVEKLAGITVPDRVNVIRVMLSELFRINSHLLYISTFIQDVGAMTPVFFAFTDRQKIYDVVEAITGFRMHPAWFRIGGVAHDLPRGWDRLLRDFLDWMPKRLDSYEKAALRNTILKGRSQGVAAYGKKEALDWGCTGAALRATGIDFDVRKSRPYSGYENFDFEIPVGGGVSDCYTRVMLKVEELRQSLRILEQCLNNMPEGPFKADHPLTTPPPKERTLQHIETLITHFLQVSWGPVMPANESFQMVEATKGINSYYLTSDGSTMSYRTRIRTPSYAHLQQIPVAVRGSLVSDLIVHLGSIDFVMSDVDR.

The segment at 1-190 (MVNNMTDLTA…DPFELTKAKQ (190 aa)) is NADH dehydrogenase I subunit C. Residues 214–600 (DFMFLNLGPN…IDFVMSDVDR (387 aa)) are NADH dehydrogenase I subunit D.

It in the N-terminal section; belongs to the complex I 30 kDa subunit family. This sequence in the C-terminal section; belongs to the complex I 49 kDa subunit family. In terms of assembly, NDH-1 is composed of 13 different subunits. Subunits NuoB, CD, E, F, and G constitute the peripheral sector of the complex.

The protein localises to the cell inner membrane. The enzyme catalyses a quinone + NADH + 5 H(+)(in) = a quinol + NAD(+) + 4 H(+)(out). Functionally, NDH-1 shuttles electrons from NADH, via FMN and iron-sulfur (Fe-S) centers, to quinones in the respiratory chain. The immediate electron acceptor for the enzyme in this species is believed to be ubiquinone. Couples the redox reaction to proton translocation (for every two electrons transferred, four hydrogen ions are translocated across the cytoplasmic membrane), and thus conserves the redox energy in a proton gradient. In Citrobacter koseri (strain ATCC BAA-895 / CDC 4225-83 / SGSC4696), this protein is NADH-quinone oxidoreductase subunit C/D.